The following is a 492-amino-acid chain: Trigger factor (492 aa).

One can recognise a PPIase FKBP-type domain in the interval Gly-164 to Ala-249. Positions Glu-440–Glu-492 are disordered. A compositionally biased stretch (basic and acidic residues) spans Ser-445–Pro-463. The segment covering Lys-464 to Ala-482 has biased composition (basic residues). Over residues Pro-483–Glu-492 the composition is skewed to basic and acidic residues.

This sequence belongs to the FKBP-type PPIase family. Tig subfamily.

It is found in the cytoplasm. The enzyme catalyses [protein]-peptidylproline (omega=180) = [protein]-peptidylproline (omega=0). Involved in protein export. Acts as a chaperone by maintaining the newly synthesized protein in an open conformation. Functions as a peptidyl-prolyl cis-trans isomerase. This chain is Trigger factor, found in Zymomonas mobilis subsp. mobilis (strain ATCC 31821 / ZM4 / CP4).